Reading from the N-terminus, the 371-residue chain is Anhydro-N-acetylmuramic acid kinase (371 aa).

Residue glycine 12–aspartate 19 coordinates ATP.

Belongs to the anhydro-N-acetylmuramic acid kinase family.

It carries out the reaction 1,6-anhydro-N-acetyl-beta-muramate + ATP + H2O = N-acetyl-D-muramate 6-phosphate + ADP + H(+). Its pathway is amino-sugar metabolism; 1,6-anhydro-N-acetylmuramate degradation. It functions in the pathway cell wall biogenesis; peptidoglycan recycling. Its function is as follows. Catalyzes the specific phosphorylation of 1,6-anhydro-N-acetylmuramic acid (anhMurNAc) with the simultaneous cleavage of the 1,6-anhydro ring, generating MurNAc-6-P. Is required for the utilization of anhMurNAc either imported from the medium or derived from its own cell wall murein, and thus plays a role in cell wall recycling. The protein is Anhydro-N-acetylmuramic acid kinase of Saccharophagus degradans (strain 2-40 / ATCC 43961 / DSM 17024).